Reading from the N-terminus, the 247-residue chain is Probable transcriptional regulatory protein Glov_1245 (247 aa).

This sequence belongs to the TACO1 family.

The protein resides in the cytoplasm. This chain is Probable transcriptional regulatory protein Glov_1245, found in Trichlorobacter lovleyi (strain ATCC BAA-1151 / DSM 17278 / SZ) (Geobacter lovleyi).